The following is a 282-amino-acid chain: MEMO1 family protein Msm_1438 (282 aa).

Belongs to the MEMO1 family.

The protein is MEMO1 family protein Msm_1438 of Methanobrevibacter smithii (strain ATCC 35061 / DSM 861 / OCM 144 / PS).